A 125-amino-acid polypeptide reads, in one-letter code: Large ribosomal subunit protein bL12 (125 aa).

The protein belongs to the bacterial ribosomal protein bL12 family. As to quaternary structure, homodimer. Part of the ribosomal stalk of the 50S ribosomal subunit. Forms a multimeric L10(L12)X complex, where L10 forms an elongated spine to which 2 to 4 L12 dimers bind in a sequential fashion. Binds GTP-bound translation factors.

Forms part of the ribosomal stalk which helps the ribosome interact with GTP-bound translation factors. Is thus essential for accurate translation. The protein is Large ribosomal subunit protein bL12 of Anaeromyxobacter dehalogenans (strain 2CP-1 / ATCC BAA-258).